Reading from the N-terminus, the 502-residue chain is ATP synthase subunit alpha (502 aa).

ATP is bound at residue 169-176; it reads GDRQTGKT.

Belongs to the ATPase alpha/beta chains family. In terms of assembly, F-type ATPases have 2 components, CF(1) - the catalytic core - and CF(0) - the membrane proton channel. CF(1) has five subunits: alpha(3), beta(3), gamma(1), delta(1), epsilon(1). CF(0) has three main subunits: a(1), b(2) and c(9-12). The alpha and beta chains form an alternating ring which encloses part of the gamma chain. CF(1) is attached to CF(0) by a central stalk formed by the gamma and epsilon chains, while a peripheral stalk is formed by the delta and b chains.

It is found in the cell membrane. It catalyses the reaction ATP + H2O + 4 H(+)(in) = ADP + phosphate + 5 H(+)(out). Its function is as follows. Produces ATP from ADP in the presence of a proton gradient across the membrane. The alpha chain is a regulatory subunit. The protein is ATP synthase subunit alpha of Staphylococcus aureus (strain Mu3 / ATCC 700698).